A 737-amino-acid polypeptide reads, in one-letter code: Procollagen-lysine,2-oxoglutarate 5-dioxygenase 2 (737 aa).

Positions 1–25 (MGDRGARPGRLMPMLALLSWAAGLG) are cleaved as a signal peptide. 2 N-linked (GlcNAc...) asparagine glycosylation sites follow: asparagine 63 and asparagine 209. Phosphothreonine is present on threonine 320. Tyrosine 323 carries the phosphotyrosine modification. 2 N-linked (GlcNAc...) asparagine glycosylation sites follow: asparagine 365 and asparagine 522. Positions 644 to 737 (KGFALLNFVV…RYIAVSFIDP (94 aa)) constitute a Fe2OG dioxygenase domain. Histidine 666 and aspartate 668 together coordinate Fe cation. The N-linked (GlcNAc...) asparagine glycan is linked to asparagine 696. An N6-succinyllysine modification is found at lysine 704. Histidine 718 serves as a coordination point for Fe cation. The N-linked (GlcNAc...) asparagine glycan is linked to asparagine 725. Residue arginine 728 is part of the active site.

As to quaternary structure, homodimer. Fe(2+) is required as a cofactor. Requires L-ascorbate as cofactor. In terms of tissue distribution, is highly expressed in the heart, lung, kidney, eye, ovary and placenta.

The protein localises to the rough endoplasmic reticulum membrane. It carries out the reaction L-lysyl-[collagen] + 2-oxoglutarate + O2 = (5R)-5-hydroxy-L-lysyl-[collagen] + succinate + CO2. Functionally, forms hydroxylysine residues in -Xaa-Lys-Gly- sequences in collagens. These hydroxylysines serve as sites of attachment for carbohydrate units and are essential for the stability of the intermolecular collagen cross-links. The polypeptide is Procollagen-lysine,2-oxoglutarate 5-dioxygenase 2 (Plod2) (Mus musculus (Mouse)).